A 231-amino-acid polypeptide reads, in one-letter code: Orotidine 5'-phosphate decarboxylase (231 aa).

Substrate-binding positions include aspartate 11, lysine 33, 60–69 (DLKLHDIPNT), threonine 117, arginine 179, glutamine 187, glycine 207, and arginine 208. Lysine 62 acts as the Proton donor in catalysis.

It belongs to the OMP decarboxylase family. Type 1 subfamily. Homodimer.

It carries out the reaction orotidine 5'-phosphate + H(+) = UMP + CO2. It participates in pyrimidine metabolism; UMP biosynthesis via de novo pathway; UMP from orotate: step 2/2. Its function is as follows. Catalyzes the decarboxylation of orotidine 5'-monophosphate (OMP) to uridine 5'-monophosphate (UMP). This is Orotidine 5'-phosphate decarboxylase from Ehrlichia chaffeensis (strain ATCC CRL-10679 / Arkansas).